We begin with the raw amino-acid sequence, 327 residues long: Ornithine carbamoyltransferase (327 aa).

Carbamoyl phosphate contacts are provided by residues 56–59 (STRT), Gln-83, Arg-107, and 134–137 (HPTQ). Residues Asn-166, Asp-230, and 234 to 235 (SM) each bind L-ornithine. Carbamoyl phosphate-binding positions include 269-270 (CL) and Arg-314.

The protein belongs to the aspartate/ornithine carbamoyltransferase superfamily. OTCase family.

The protein localises to the cytoplasm. The catalysed reaction is carbamoyl phosphate + L-ornithine = L-citrulline + phosphate + H(+). The protein operates within amino-acid degradation; L-arginine degradation via ADI pathway; carbamoyl phosphate from L-arginine: step 2/2. Reversibly catalyzes the transfer of the carbamoyl group from carbamoyl phosphate (CP) to the N(epsilon) atom of ornithine (ORN) to produce L-citrulline. This chain is Ornithine carbamoyltransferase, found in Borreliella burgdorferi (strain ZS7) (Borrelia burgdorferi).